The chain runs to 263 residues: MALQIPSLLLSAAVVVLMVLSSPGTEGGDSERHFVFQFKGECYFTNGTQRIRSVDRYIYNREEYLRFDSDVGEYRAVTELGRPDAEYYNKQYLEQTRAELDTVCRHNYEGVETHTSLRRLEQPNVVISLSRTEALNHHNTLVCSVTDFYPAKIKVRWFRNGQEETVGVSSTQLISNGDWTFQVLVMLEMTPRRGEVYTCHVEHPSLKSPITVEWRAQSESARSKMLSGIGGCVLGVIFLGLGLFIRHRSQKGPRGPPPAGLLQ.

A signal peptide spans 1–27; it reads MALQIPSLLLSAAVVVLMVLSSPGTEG. The tract at residues 28–120 is beta-1; the sequence is GDSERHFVFQ…VETHTSLRRL (93 aa). Residues 28–224 lie on the Extracellular side of the membrane; sequence GDSERHFVFQ…RAQSESARSK (197 aa). Cystine bridges form between cysteine 42–cysteine 104 and cysteine 143–cysteine 199. The N-linked (GlcNAc...) asparagine glycan is linked to asparagine 46. The interval 121-214 is beta-2; that stretch reads EQPNVVISLS…SLKSPITVEW (94 aa). An Ig-like C1-type domain is found at 123–211; the sequence is PNVVISLSRT…EHPSLKSPIT (89 aa). The tract at residues 215–224 is connecting peptide; that stretch reads RAQSESARSK. Residues 225–245 form a helical membrane-spanning segment; it reads MLSGIGGCVLGVIFLGLGLFI. The Cytoplasmic segment spans residues 246 to 263; sequence RHRSQKGPRGPPPAGLLQ.

Belongs to the MHC class II family. Post-translationally, ubiquitinated in immature dendritic cells leading to down-regulation of MHC class II.

It is found in the membrane. The protein is H-2 class II histocompatibility antigen, A-S beta chain (H2-Ab1) of Mus musculus (Mouse).